Consider the following 587-residue polypeptide: Protein NDNF (587 aa).

The first 24 residues, 1 to 24, serve as a signal peptide directing secretion; that stretch reads MQRSTMLPGVELLLLFLLSTSLHA. Residues asparagine 109, asparagine 129, asparagine 190, asparagine 321, asparagine 334, asparagine 459, asparagine 498, and asparagine 558 are each glycosylated (N-linked (GlcNAc...) asparagine).

As to quaternary structure, binds heparin. Interacts with dally; the interaction promotes dally degradation. Interacts with dpp and gbb.

It localises to the secreted. It is found in the extracellular space. The protein resides in the extracellular matrix. Its function is as follows. Secretory protein that acts as a feedback regulator of dpp/BMP, wg and hh signaling pathways. In the developing wing, is a dosage-dependent modulator of dpp/BMP signaling involved in wing growth and crossvein patterning; low levels promote and high levels inhibit dpp/BMP signaling. In the early pupal wing, inhibits dpp/BMP signaling activity to prevent the formation of ectopic crossveins in the posterior compartment. Binds to dpp and gbb to modulate their release and activity decreasing dpp/BMP signaling in the responding cells. During wing development regulates dpp/BMP coreceptor dally availability on the cell surface. Might have a role in testis development. The chain is Protein NDNF from Drosophila melanogaster (Fruit fly).